The primary structure comprises 384 residues: Beta-ureidopropionase (384 aa).

Residues 72–344 form the CN hydrolase domain; sequence VHVGLVQNRI…DGLLVAKLDL (273 aa). E119 functions as the Proton acceptor in the catalytic mechanism. The active-site Proton donor is the K196. C233 functions as the Nucleophile in the catalytic mechanism. S378 carries the phosphoserine modification.

This sequence belongs to the carbon-nitrogen hydrolase superfamily. BUP family. Homodimer, homotetramer, homooctamer; can also form higher homooligomers. As to expression, detected in liver (at protein level).

The protein localises to the cytoplasm. The catalysed reaction is 3-(carbamoylamino)propanoate + H2O + 2 H(+) = beta-alanine + NH4(+) + CO2. The enzyme catalyses 3-(carbamoylamino)-2-methylpropanoate + H2O + 2 H(+) = (R)-3-amino-2-methylpropanoate + NH4(+) + CO2. Its pathway is amino-acid biosynthesis; beta-alanine biosynthesis. Strongly inhibited by 50 mM Zn(2+). Not inhibited by EDTA. Competitively inhibited by beta-alanine, 5-aminolevulinic acid (ALA), beta-aminoisobutyrate and 4-ureidobutyrate. Catalyzes a late step in pyrimidine degradation. Converts N-carbamoyl-beta-alanine (3-ureidopropanoate) into beta-alanine, ammonia and carbon dioxide. Likewise, converts N-carbamoyl-beta-aminoisobutyrate (3-ureidoisobutyrate) into beta-aminoisobutyrate, ammonia and carbon dioxide. The polypeptide is Beta-ureidopropionase (UPB1) (Homo sapiens (Human)).